Consider the following 371-residue polypeptide: tRNA-specific 2-thiouridylase MnmA (371 aa).

Residues 13 to 20 (GMSGGVDS) and M39 contribute to the ATP site. The segment at 99 to 101 (NPD) is interaction with target base in tRNA. C104 acts as the Nucleophile in catalysis. C104 and C200 are oxidised to a cystine. Residue G128 coordinates ATP. The segment at 150-152 (KDQ) is interaction with tRNA. Residue C200 is the Cysteine persulfide intermediate of the active site. The tract at residues 308–309 (RY) is interaction with tRNA.

Belongs to the MnmA/TRMU family.

The protein localises to the cytoplasm. The catalysed reaction is S-sulfanyl-L-cysteinyl-[protein] + uridine(34) in tRNA + AH2 + ATP = 2-thiouridine(34) in tRNA + L-cysteinyl-[protein] + A + AMP + diphosphate + H(+). Catalyzes the 2-thiolation of uridine at the wobble position (U34) of tRNA, leading to the formation of s(2)U34. The chain is tRNA-specific 2-thiouridylase MnmA from Bacillus cytotoxicus (strain DSM 22905 / CIP 110041 / 391-98 / NVH 391-98).